Consider the following 477-residue polypeptide: Protein translocase subunit SecY (477 aa).

Helical transmembrane passes span 28–48, 67–89, 130–150, 165–185, 196–216, 234–254, 286–306, 329–349, 387–407, and 413–433; these read FMISFLITVVLLVLFRVLAII, FFSLFNLLGGGGLNQLSLFAVGI, IITLPFALVQSFAVIQIATNS, DFVAFYIIAMTAGTYLSVFLG, GITLLILSGILAQLPEGFIAA, AISFFIYFMAFVTLLFATTFI, SAGVIPVIFASSIMSIPVTIA, GIVLYGILVILFSFFYSYIQI, FIGAPFLTVIAIIPYIVSALI, and LSLGGTGIIIIVTAVVEFMSA.

This sequence belongs to the SecY/SEC61-alpha family. In terms of assembly, component of the Sec protein translocase complex. Heterotrimer consisting of SecY, SecE and SecG subunits. The heterotrimers can form oligomers, although 1 heterotrimer is thought to be able to translocate proteins. Interacts with the ribosome. Interacts with SecDF, and other proteins may be involved. Interacts with SecA.

Its subcellular location is the cell membrane. Its function is as follows. The central subunit of the protein translocation channel SecYEG. Consists of two halves formed by TMs 1-5 and 6-10. These two domains form a lateral gate at the front which open onto the bilayer between TMs 2 and 7, and are clamped together by SecE at the back. The channel is closed by both a pore ring composed of hydrophobic SecY resides and a short helix (helix 2A) on the extracellular side of the membrane which forms a plug. The plug probably moves laterally to allow the channel to open. The ring and the pore may move independently. The polypeptide is Protein translocase subunit SecY (Mycoplasma pneumoniae (strain ATCC 29342 / M129 / Subtype 1) (Mycoplasmoides pneumoniae)).